The primary structure comprises 40 residues: Photosystem II reaction center protein T (40 aa).

The helical transmembrane segment at alanine 3–phenylalanine 23 threads the bilayer.

Belongs to the PsbT family. PSII is composed of 1 copy each of membrane proteins PsbA, PsbB, PsbC, PsbD, PsbE, PsbF, PsbH, PsbI, PsbJ, PsbK, PsbL, PsbM, PsbT, PsbY, PsbZ, Psb30/Ycf12, at least 3 peripheral proteins of the oxygen-evolving complex and a large number of cofactors. It forms dimeric complexes.

Its subcellular location is the plastid. It is found in the chloroplast thylakoid membrane. Found at the monomer-monomer interface of the photosystem II (PS II) dimer, plays a role in assembly and dimerization of PSII. PSII is a light-driven water plastoquinone oxidoreductase, using light energy to abstract electrons from H(2)O, generating a proton gradient subsequently used for ATP formation. This chain is Photosystem II reaction center protein T, found in Anthoceros angustus (Hornwort).